The primary structure comprises 87 residues: CRISPR-associated endoribonuclease Cas2 (87 aa).

D8 contacts Mg(2+).

This sequence belongs to the CRISPR-associated endoribonuclease Cas2 protein family. As to quaternary structure, homodimer, forms a heterotetramer with a Cas1 homodimer. Requires Mg(2+) as cofactor.

CRISPR (clustered regularly interspaced short palindromic repeat), is an adaptive immune system that provides protection against mobile genetic elements (viruses, transposable elements and conjugative plasmids). CRISPR clusters contain sequences complementary to antecedent mobile elements and target invading nucleic acids. CRISPR clusters are transcribed and processed into CRISPR RNA (crRNA). Functions as a ssRNA-specific endoribonuclease. Involved in the integration of spacer DNA into the CRISPR cassette. This chain is CRISPR-associated endoribonuclease Cas2, found in Dictyoglomus turgidum (strain DSM 6724 / Z-1310).